Here is a 378-residue protein sequence, read N- to C-terminus: Spermidine/putrescine import ATP-binding protein PotA (378 aa).

An ABC transporter domain is found at 18-248 (VQLAGIRKCF…PKNLFVAGFI (231 aa)). ATP is bound at residue 50-57 (GPSGCGKT).

It belongs to the ABC transporter superfamily. Spermidine/putrescine importer (TC 3.A.1.11.1) family. The complex is composed of two ATP-binding proteins (PotA), two transmembrane proteins (PotB and PotC) and a solute-binding protein (PotD).

Its subcellular location is the cell inner membrane. It carries out the reaction ATP + H2O + polyamine-[polyamine-binding protein]Side 1 = ADP + phosphate + polyamineSide 2 + [polyamine-binding protein]Side 1.. In terms of biological role, part of the ABC transporter complex PotABCD involved in spermidine/putrescine import. Responsible for energy coupling to the transport system. In Shigella boydii serotype 4 (strain Sb227), this protein is Spermidine/putrescine import ATP-binding protein PotA.